The sequence spans 262 residues: Hydroxyethylthiazole kinase (262 aa).

Position 44 (M44) interacts with substrate. 2 residues coordinate ATP: R118 and T166. A substrate-binding site is contributed by G193.

The protein belongs to the Thz kinase family. Requires Mg(2+) as cofactor.

It carries out the reaction 5-(2-hydroxyethyl)-4-methylthiazole + ATP = 4-methyl-5-(2-phosphooxyethyl)-thiazole + ADP + H(+). It participates in cofactor biosynthesis; thiamine diphosphate biosynthesis; 4-methyl-5-(2-phosphoethyl)-thiazole from 5-(2-hydroxyethyl)-4-methylthiazole: step 1/1. Catalyzes the phosphorylation of the hydroxyl group of 4-methyl-5-beta-hydroxyethylthiazole (THZ). The sequence is that of Hydroxyethylthiazole kinase from Chlamydia caviae (strain ATCC VR-813 / DSM 19441 / 03DC25 / GPIC) (Chlamydophila caviae).